The primary structure comprises 753 residues: Polyribonucleotide nucleotidyltransferase (753 aa).

Mg(2+) contacts are provided by Asp-543 and Asp-549. Positions 609–668 (PRITTVKIPVAKIGELIGPKGKNINALTEETGANISIEDDGTVFISAADGASAEAAIEKI) constitute a KH domain. The S1 motif domain maps to 680–749 (GERFLGTVVK…NRGKISLVPV (70 aa)).

This sequence belongs to the polyribonucleotide nucleotidyltransferase family. The cofactor is Mg(2+).

It localises to the cytoplasm. The catalysed reaction is RNA(n+1) + phosphate = RNA(n) + a ribonucleoside 5'-diphosphate. Functionally, involved in mRNA degradation. Catalyzes the phosphorolysis of single-stranded polyribonucleotides processively in the 3'- to 5'-direction. The protein is Polyribonucleotide nucleotidyltransferase of Corynebacterium glutamicum (strain R).